Consider the following 562-residue polypeptide: 2-succinyl-5-enolpyruvyl-6-hydroxy-3-cyclohexene-1-carboxylate synthase (562 aa).

This sequence belongs to the TPP enzyme family. MenD subfamily. Homodimer. It depends on Mg(2+) as a cofactor. Mn(2+) is required as a cofactor. Requires thiamine diphosphate as cofactor.

The enzyme catalyses isochorismate + 2-oxoglutarate + H(+) = 5-enolpyruvoyl-6-hydroxy-2-succinyl-cyclohex-3-ene-1-carboxylate + CO2. It participates in quinol/quinone metabolism; 1,4-dihydroxy-2-naphthoate biosynthesis; 1,4-dihydroxy-2-naphthoate from chorismate: step 2/7. Its pathway is cofactor biosynthesis; phylloquinone biosynthesis. In terms of biological role, catalyzes the thiamine diphosphate-dependent decarboxylation of 2-oxoglutarate and the subsequent addition of the resulting succinic semialdehyde-thiamine pyrophosphate anion to isochorismate to yield 2-succinyl-5-enolpyruvyl-6-hydroxy-3-cyclohexene-1-carboxylate (SEPHCHC). This is 2-succinyl-5-enolpyruvyl-6-hydroxy-3-cyclohexene-1-carboxylate synthase from Thermosynechococcus vestitus (strain NIES-2133 / IAM M-273 / BP-1).